Consider the following 571-residue polypeptide: Proline--tRNA ligase (571 aa).

The protein belongs to the class-II aminoacyl-tRNA synthetase family. ProS type 1 subfamily. Homodimer.

The protein localises to the cytoplasm. It catalyses the reaction tRNA(Pro) + L-proline + ATP = L-prolyl-tRNA(Pro) + AMP + diphosphate. Functionally, catalyzes the attachment of proline to tRNA(Pro) in a two-step reaction: proline is first activated by ATP to form Pro-AMP and then transferred to the acceptor end of tRNA(Pro). As ProRS can inadvertently accommodate and process non-cognate amino acids such as alanine and cysteine, to avoid such errors it has two additional distinct editing activities against alanine. One activity is designated as 'pretransfer' editing and involves the tRNA(Pro)-independent hydrolysis of activated Ala-AMP. The other activity is designated 'posttransfer' editing and involves deacylation of mischarged Ala-tRNA(Pro). The misacylated Cys-tRNA(Pro) is not edited by ProRS. The sequence is that of Proline--tRNA ligase from Psychromonas ingrahamii (strain DSM 17664 / CCUG 51855 / 37).